We begin with the raw amino-acid sequence, 431 residues long: MGIGLVRPAPEEEIQAMVEEISASNIEAIITKLVSFGTRHTLSQQNSSTYGIGAARDWIAAEMRRYAGDSEGRMSVVVQSYVQPVASRIPFPVRISNVVATVRGSEEPERVYVMTGHYDSRVTDVMDYTSDAPGANDDASGTAIAMELARILAKRRPRSTIILAAVAGEEQGLYGAGYLAGTLKNSSTNVEGMLNCDIVGSSTGDRGQRDPFTIRAFAQGPPSYESATVAARRLQIGGENDSPARELARFSAEVAANNVTGMNVAIIYRLDRFLRGGDHTPFLTAGYPAIRYTEPNENFDHQHQDLRTENGTVYGDLIEFVDFKYTARVGKVNLATLWSLSEAPGMPRNVTIDTTVLDNDTRLKWIVSNSTAVASYEVVWRSTTASLWTKMLDVGKVGEVTLPLSKDNMIFGVRSVGINSKKSPAVYPFPG.

Asn46 is a glycosylation site (N-linked (GlcNAc...) asparagine). Zn(2+)-binding residues include His117, Asp137, and Glu170. A glycan (N-linked (GlcNAc...) asparagine) is linked at Asn185. Residue Asp197 coordinates Zn(2+). N-linked (GlcNAc...) asparagine glycans are attached at residues Asn258, Asn310, Asn349, Asn359, and Asn369. Residues 344–431 (PGMPRNVTID…KSPAVYPFPG (88 aa)) enclose the Fibronectin type-III domain.

This sequence belongs to the peptidase M28 family. M28B subfamily. It depends on Zn(2+) as a cofactor.

Its subcellular location is the secreted. This chain is Probable zinc metalloprotease Lema_P086240, found in Leptosphaeria maculans (strain JN3 / isolate v23.1.3 / race Av1-4-5-6-7-8) (Blackleg fungus).